Here is a 326-residue protein sequence, read N- to C-terminus: Flap endonuclease 1 (326 aa).

An N-domain region spans residues 1–98 (MGVQFGDFIP…KTRKVRREMK (98 aa)). Mg(2+) is bound by residues Asp-27, Asp-80, Glu-152, Glu-154, Asp-173, Asp-175, and Asp-224. Positions 116 to 245 (EAAKYAKRVS…KRAYELVRSG (130 aa)) are I-domain. The segment at 317–325 (KQKTLDAWF) is interaction with PCNA.

The protein belongs to the XPG/RAD2 endonuclease family. FEN1 subfamily. Interacts with PCNA. PCNA stimulates the nuclease activity without altering cleavage specificity. Requires Mg(2+) as cofactor.

Its function is as follows. Structure-specific nuclease with 5'-flap endonuclease and 5'-3' exonuclease activities involved in DNA replication and repair. During DNA replication, cleaves the 5'-overhanging flap structure that is generated by displacement synthesis when DNA polymerase encounters the 5'-end of a downstream Okazaki fragment. Binds the unpaired 3'-DNA end and kinks the DNA to facilitate 5' cleavage specificity. Cleaves one nucleotide into the double-stranded DNA from the junction in flap DNA, leaving a nick for ligation. Also involved in the base excision repair (BER) pathway. Acts as a genome stabilization factor that prevents flaps from equilibrating into structures that lead to duplications and deletions. Also possesses 5'-3' exonuclease activity on nicked or gapped double-stranded DNA. The chain is Flap endonuclease 1 from Methanocaldococcus jannaschii (strain ATCC 43067 / DSM 2661 / JAL-1 / JCM 10045 / NBRC 100440) (Methanococcus jannaschii).